The primary structure comprises 173 residues: bZIP transcription factor 44 (173 aa).

A disordered region spans residues 1–65 (MNNKTEMGSS…SRMRKQKHLD (65 aa)). Residues 8–22 (GSSTSGNCSSVSTTG) are compositionally biased toward low complexity. The segment covering 30–41 (SDLRQRDLIDER) has biased composition (basic and acidic residues). Residues 39-102 (DERKRKRKQS…VTIEAENDIL (64 aa)) enclose the bZIP domain. Residues 41-62 (RKRKRKQSNRESARRSRMRKQK) form a basic motif region. The interval 67–81 (LTAQVTHLRKENAQI) is leucine-zipper.

Forms heterodimers with BZIP1, BZIP9, BZIP10, BZIP25 and BZIP63. Expressed in the micropylar endosperm and radicle tip in early germinating seeds.

The protein resides in the nucleus. In terms of biological role, transcription factor that binds to the DNA G-box motif 5'-CACGTG-3' of MAN7 promoter. Involved in the positive regulation of seed germination through MAN7 gene activation. MAN7 is required for both, loosening of the micropylar endosperm, and rupture of the seed coat in germinating seeds. The chain is bZIP transcription factor 44 from Arabidopsis thaliana (Mouse-ear cress).